The primary structure comprises 74 residues: Mucroporin (74 aa).

The signal sequence occupies residues 1–22 (MKVKFLLAVFLIVLVVTDHCHA). At lysine 39 the chain carries Lysine amide. Residues 45–74 (QMEARFEPQNRNYRKRELDLEKLFANMPDY) constitute a propeptide that is removed on maturation.

Belongs to the non-disulfide-bridged peptide (NDBP) superfamily. Short antimicrobial peptide (group 4) family. In terms of tissue distribution, expressed by the venom gland.

The protein localises to the secreted. Its subcellular location is the target cell membrane. In terms of biological role, mucroporin: cationic host defense peptide that have antibacterial activity by breaking membranes. Is more effective on Gram-positive than on Gram-negative bacteria. Minimum inhibitory concentrations (MIC) are the following: MIC=&gt;100 ug/ml against E.coli AB94012, MIC=&gt;100 ug/ml against P.aeruginosa AB93066, MIC=25 ug/ml against B.thuringiensis AB92037, MIC=50 ug/ml against B.subtilis AB91021, MIC=25 ug/ml against S.aureus AB94004, and MIC=25 ug/ml against the methicillin-resistant coagulase-negative Staphylococcus. Its synthetic analog mucroporin-M1 is more effective. Does not show antiviral activity against any of measles, SARS-CoV, influenza H5N1, hepatitis B and HIV-1 viruses. Mutant mucroporin-M1: can inhibit Gram-positive bacteria at low concentrations and antibiotic-resistant pathogens. Minimum inhibitory concentrations (MIC) are the following: MIC=12.5 ug/ml against E.coli AB94012, MIC=100 ug/ml against P.aeruginosa AB93066, MIC=25 ug/ml against B.thuringiensis AB92037, MIC=25 ug/ml against B.subtilis AB91021, MIC=5 ug/ml against S.aureus AB94004, and MIC=5 ug/ml against the methicillin-resistant coagulase-negative Staphylococcus. Also shows antiviral activities against measles (EC(50) of 7.15 ug/ml), SARS-CoV (EC(50) of 14.46 ug/ml), influenza H5N1 viruses (EC(50) of 2.10 mug/ml), HIV-1, and hepatitis B virus. This chain is Mucroporin, found in Lychas mucronatus (Chinese swimming scorpion).